The primary structure comprises 245 residues: Sugar fermentation stimulation protein homolog (245 aa).

Belongs to the SfsA family.

The sequence is that of Sugar fermentation stimulation protein homolog from Yersinia pestis bv. Antiqua (strain Nepal516).